Reading from the N-terminus, the 203-residue chain is Small ribosomal subunit protein uS4 (203 aa).

The S4 RNA-binding domain maps to 92 to 152; sequence LRLATVLLRA…EKSRKLVPFI (61 aa).

The protein belongs to the universal ribosomal protein uS4 family. As to quaternary structure, part of the 30S ribosomal subunit. Contacts protein S5. The interaction surface between S4 and S5 is involved in control of translational fidelity.

Its function is as follows. One of the primary rRNA binding proteins, it binds directly to 16S rRNA where it nucleates assembly of the body of the 30S subunit. With S5 and S12 plays an important role in translational accuracy. The polypeptide is Small ribosomal subunit protein uS4 (Thermobifida fusca (strain YX)).